Here is an 89-residue protein sequence, read N- to C-terminus: Small ribosomal subunit protein uS14A (89 aa).

The protein belongs to the universal ribosomal protein uS14 family. Part of the 30S ribosomal subunit. Contacts proteins S3 and S10.

In terms of biological role, binds 16S rRNA, required for the assembly of 30S particles and may also be responsible for determining the conformation of the 16S rRNA at the A site. This chain is Small ribosomal subunit protein uS14A, found in Staphylococcus aureus (strain MRSA252).